Reading from the N-terminus, the 101-residue chain is Cell division suppressor protein YneA (101 aa).

In terms of domain architecture, LysM spans Met-35 to Ile-86.

Belongs to the YneA family.

The protein resides in the cytoplasm. In terms of biological role, inhibits cell division during the SOS response. Affects a later stage of the cell division protein assembly, after the assembly of the Z ring, by probably suppressing recruitment of FtsL and/or DivIC to the division machinery. This chain is Cell division suppressor protein YneA, found in Geobacillus thermodenitrificans (strain NG80-2).